The chain runs to 1044 residues: Probable pre-mRNA-splicing factor ATP-dependent RNA helicase DEAH6 (1044 aa).

2 disordered regions span residues 99–134 (EADH…SEQL) and 152–211 (RRKV…VRRD). Over residues 157-167 (EDEDDGTESEE) the composition is skewed to acidic residues. The span at 168–211 (ERLRDQREREELEQHLRERDTARTRKLTEPKMSKKEQEEFVRRD) shows a compositional bias: basic and acidic residues. The Helicase ATP-binding domain occupies 414-577 (LNAVKDHQVL…FDQAPIFRFP (164 aa)). An ATP-binding site is contributed by 427–434 (GETGSGKT). A DEAH box motif is present at residues 524–527 (DEAH). Residues 599-775 (AITTVLTIHV…SVVLSLKSLG (177 aa)) form the Helicase C-terminal domain.

It belongs to the DEAD box helicase family. DEAH subfamily. PRP2 sub-subfamily. In terms of tissue distribution, predominantly expressed in flowers.

It catalyses the reaction ATP + H2O = ADP + phosphate + H(+). In terms of biological role, may be involved in pre-mRNA splicing. In Arabidopsis thaliana (Mouse-ear cress), this protein is Probable pre-mRNA-splicing factor ATP-dependent RNA helicase DEAH6.